A 156-amino-acid polypeptide reads, in one-letter code: Small ribosomal subunit protein uS7 (156 aa).

Belongs to the universal ribosomal protein uS7 family. As to quaternary structure, part of the 30S ribosomal subunit. Contacts proteins S9 and S11.

Its function is as follows. One of the primary rRNA binding proteins, it binds directly to 16S rRNA where it nucleates assembly of the head domain of the 30S subunit. Is located at the subunit interface close to the decoding center, probably blocks exit of the E-site tRNA. This Parafrankia sp. (strain EAN1pec) protein is Small ribosomal subunit protein uS7.